We begin with the raw amino-acid sequence, 626 residues long: UvrABC system protein C (626 aa).

Residues 26-105 (QEPGVYFMGD…IKQHQPHFNV (80 aa)) form the GIY-YIG domain. Residues 215–250 (QELHQLLTQQMEKAAADLKFEQAALIRDQINSLGKL) enclose the UVR domain.

The protein belongs to the UvrC family. Interacts with UvrB in an incision complex.

The protein localises to the cytoplasm. In terms of biological role, the UvrABC repair system catalyzes the recognition and processing of DNA lesions. UvrC both incises the 5' and 3' sides of the lesion. The N-terminal half is responsible for the 3' incision and the C-terminal half is responsible for the 5' incision. This chain is UvrABC system protein C, found in Synechocystis sp. (strain ATCC 27184 / PCC 6803 / Kazusa).